The chain runs to 221 residues: Kynurenine formamidase (221 aa).

Position 30 (F30) interacts with substrate. Residues H60, H64, and D66 each contribute to the Zn(2+) site. Catalysis depends on H70, which acts as the Proton donor/acceptor. Positions 172 and 184 each coordinate Zn(2+).

The protein belongs to the Cyclase 1 superfamily. KynB family. Homodimer. Zn(2+) serves as cofactor.

It catalyses the reaction N-formyl-L-kynurenine + H2O = L-kynurenine + formate + H(+). The protein operates within amino-acid degradation; L-tryptophan degradation via kynurenine pathway; L-kynurenine from L-tryptophan: step 2/2. Catalyzes the hydrolysis of N-formyl-L-kynurenine to L-kynurenine, the second step in the kynurenine pathway of tryptophan degradation. This chain is Kynurenine formamidase, found in Polaromonas sp. (strain JS666 / ATCC BAA-500).